Reading from the N-terminus, the 211-residue chain is MIASLRGTVIDKGLDYVTIECAGVGYQCSGTATTIAELPRGEEVFVTTALVVREDSQTLYVFKDADEKRAFATLQSVSGVGARLALAILSVITPQELARAVSNGDHKTLQRAPGVGKRLAERMAVDLKGKVADLGEIADTGAVGAAGAVGDGGDGQAVAPDVREQVLEALVGLGFTESKAGTTIEAVLSQWSAPQAPDASGLLRASLAAIK.

The interval 1 to 63 (MIASLRGTVI…EDSQTLYVFK (63 aa)) is domain I. The tract at residues 64–142 (DADEKRAFAT…DLGEIADTGA (79 aa)) is domain II. The tract at residues 143 to 157 (VGAAGAVGDGGDGQA) is flexible linker. Positions 158-211 (VAPDVREQVLEALVGLGFTESKAGTTIEAVLSQWSAPQAPDASGLLRASLAAIK) are domain III.

Belongs to the RuvA family. Homotetramer. Forms an RuvA(8)-RuvB(12)-Holliday junction (HJ) complex. HJ DNA is sandwiched between 2 RuvA tetramers; dsDNA enters through RuvA and exits via RuvB. An RuvB hexamer assembles on each DNA strand where it exits the tetramer. Each RuvB hexamer is contacted by two RuvA subunits (via domain III) on 2 adjacent RuvB subunits; this complex drives branch migration. In the full resolvosome a probable DNA-RuvA(4)-RuvB(12)-RuvC(2) complex forms which resolves the HJ.

The protein resides in the cytoplasm. In terms of biological role, the RuvA-RuvB-RuvC complex processes Holliday junction (HJ) DNA during genetic recombination and DNA repair, while the RuvA-RuvB complex plays an important role in the rescue of blocked DNA replication forks via replication fork reversal (RFR). RuvA specifically binds to HJ cruciform DNA, conferring on it an open structure. The RuvB hexamer acts as an ATP-dependent pump, pulling dsDNA into and through the RuvAB complex. HJ branch migration allows RuvC to scan DNA until it finds its consensus sequence, where it cleaves and resolves the cruciform DNA. This is Holliday junction branch migration complex subunit RuvA from Corynebacterium jeikeium (strain K411).